We begin with the raw amino-acid sequence, 107 residues long: Essential MCU regulator, mitochondrial (107 aa).

Residues 1–47 (MASTAARRLAWVAVRPGALWSGPRGRRGGDVYTVPGSSGLSQVPSRS) constitute a mitochondrion transit peptide. Residues 48–65 (VIVTRSGAILPKPVKMSF) are Mitochondrial matrix-facing. A helical membrane pass occupies residues 66 to 85 (GLLRVFSIVIPFLYVGTLIS). The short motif at 81 to 85 (GTLIS) is the GXXXX[G/A/S] element. Residues 86 to 107 (KNFAALLEEHDIFVPEDDDDDD) are Mitochondrial intermembrane-facing.

This sequence belongs to the SMDT1/EMRE family. Component of the uniplex complex, composed of MCU, EMRE/SMDT1, MICU1 and MICU2 (or MICU3) in a 4:4:1:1 stoichiometry. The number of EMRE/SMDT1 molecules is hovewer variable, ranging from 1 to 4 copies per uniplex complex, leading to uniplex complexes with distinct gatekeeping profiles. Interacts (via its C-terminal poly-Asp tail) with MCUR1; the interaction is direct. Unprocessed form interacts (via transit peptide) with MAIP1. Undergoes proteolytic degradation in neurons: degraded by AFG3L2 and SPG7 before SMDT1/EMRE assembly with the uniporter complex, limiting the availability of SMDT1/EMRE for MCU assembly and promoting efficient assembly of gatekeeper subunits with MCU. As to expression, widely expressed.

Its subcellular location is the mitochondrion inner membrane. Essential regulatory subunit of the mitochondrial calcium uniporter complex (uniplex), a complex that mediates calcium uptake into mitochondria. Required to bridge the calcium-sensing proteins MICU1 with the calcium-conducting subunit MCU. Acts by mediating activation of MCU and retention of MICU1 to the MCU pore, in order to ensure tight regulation of the uniplex complex and appropriate responses to intracellular calcium signaling. This Mus musculus (Mouse) protein is Essential MCU regulator, mitochondrial.